The chain runs to 162 residues: SsrA-binding protein (162 aa).

Basic and acidic residues predominate over residues 137-154; the sequence is HDKREDTKAREWDREKAR. Residues 137-162 form a disordered region; it reads HDKREDTKAREWDREKARIMKNKHRG.

This sequence belongs to the SmpB family.

Its subcellular location is the cytoplasm. In terms of biological role, required for rescue of stalled ribosomes mediated by trans-translation. Binds to transfer-messenger RNA (tmRNA), required for stable association of tmRNA with ribosomes. tmRNA and SmpB together mimic tRNA shape, replacing the anticodon stem-loop with SmpB. tmRNA is encoded by the ssrA gene; the 2 termini fold to resemble tRNA(Ala) and it encodes a 'tag peptide', a short internal open reading frame. During trans-translation Ala-aminoacylated tmRNA acts like a tRNA, entering the A-site of stalled ribosomes, displacing the stalled mRNA. The ribosome then switches to translate the ORF on the tmRNA; the nascent peptide is terminated with the 'tag peptide' encoded by the tmRNA and targeted for degradation. The ribosome is freed to recommence translation, which seems to be the essential function of trans-translation. This is SsrA-binding protein from Aeromonas salmonicida (strain A449).